The chain runs to 215 residues: MOB kinase activator-like 1B (215 aa).

Residues 1-29 (MSLFGLGSRNQKTFRPKKSAPTGSKGAQL) form a disordered region. Zn(2+) contacts are provided by Cys80, Cys85, His162, and His167.

The protein belongs to the MOB1/phocein family. As to expression, constitutively expressed with higher expression in roots, flowers and pods than in leaves and stems.

Its subcellular location is the cytoplasm. It is found in the cytoskeleton. It localises to the phragmoplast. The polypeptide is MOB kinase activator-like 1B (Medicago sativa subsp. falcata (Sickle medic)).